The sequence spans 153 residues: Endoribonuclease YbeY (153 aa).

Zn(2+) contacts are provided by His116, His120, and His126.

Belongs to the endoribonuclease YbeY family. Zn(2+) is required as a cofactor.

It is found in the cytoplasm. Its function is as follows. Single strand-specific metallo-endoribonuclease involved in late-stage 70S ribosome quality control and in maturation of the 3' terminus of the 16S rRNA. This Paraburkholderia phytofirmans (strain DSM 17436 / LMG 22146 / PsJN) (Burkholderia phytofirmans) protein is Endoribonuclease YbeY.